Reading from the N-terminus, the 342-residue chain is Pre-mRNA-splicing factor 18 (342 aa).

Met-1 is subject to N-acetylmethionine.

The protein belongs to the PRP18 family. In terms of assembly, heterodimer with PPIH. Interacts with PRPF4 and with the spliceosome. Part of a complex containing U4/U6 snRNPs.

Its subcellular location is the nucleus speckle. In terms of biological role, participates in the second step of pre-mRNA splicing. The chain is Pre-mRNA-splicing factor 18 (PRPF18) from Pongo abelii (Sumatran orangutan).